The primary structure comprises 868 residues: Aconitate hydratase B (868 aa).

Substrate is bound by residues Arg192, 235 to 237 (SSR), 404 to 406 (QDT), and Ser488. 3 residues coordinate [4Fe-4S] cluster: Cys700, Cys758, and Cys761. The substrate site is built by Arg780 and Arg785.

It belongs to the aconitase/IPM isomerase family. As to quaternary structure, monomer. [4Fe-4S] cluster serves as cofactor.

The catalysed reaction is citrate = D-threo-isocitrate. It carries out the reaction (2S,3R)-3-hydroxybutane-1,2,3-tricarboxylate = 2-methyl-cis-aconitate + H2O. The protein operates within carbohydrate metabolism; tricarboxylic acid cycle; isocitrate from oxaloacetate: step 2/2. It participates in organic acid metabolism; propanoate degradation. In terms of biological role, involved in the catabolism of short chain fatty acids (SCFA) via the tricarboxylic acid (TCA)(acetyl degradation route) and probably via the 2-methylcitrate cycle I (propionate degradation route). Catalyzes the reversible isomerization of citrate to isocitrate via cis-aconitate. Catalyzes the hydration of 2-methyl-cis-aconitate to yield (2R,3S)-2-methylisocitrate. The apo form of AcnB functions as a RNA-binding regulatory protein. The protein is Aconitate hydratase B (acnB) of Synechocystis sp. (strain ATCC 27184 / PCC 6803 / Kazusa).